Reading from the N-terminus, the 122-residue chain is Large ribosomal subunit protein uL14 (122 aa).

The protein belongs to the universal ribosomal protein uL14 family. As to quaternary structure, part of the 50S ribosomal subunit. Forms a cluster with proteins L3 and L19. In the 70S ribosome, L14 and L19 interact and together make contacts with the 16S rRNA in bridges B5 and B8.

Its function is as follows. Binds to 23S rRNA. Forms part of two intersubunit bridges in the 70S ribosome. This Staphylococcus aureus (strain MW2) protein is Large ribosomal subunit protein uL14.